Here is a 592-residue protein sequence, read N- to C-terminus: PiggyBac transposable element-derived protein 2 (592 aa).

The segment at Glu-31 to His-69 is disordered.

This chain is PiggyBac transposable element-derived protein 2 (PGBD2), found in Homo sapiens (Human).